The following is a 186-amino-acid chain: MIEMARLKEFYKKDVVTMMMKRFNYSSVMEVPRILKITLNMGVGEAVGDKKVMNHAIEDMTLISGQKPVVTKARKSIAGFKIREGWPIGCKVTLRRERMYEFLDRLISITLPRVRDFRGLNPKSFDGTGNYSMGIHEQIVFPEIDYDKTDGIRGLDICITTSAKTNEEAKALLEAFNLPLKDKDRK.

Belongs to the universal ribosomal protein uL5 family. In terms of assembly, part of the 50S ribosomal subunit; part of the 5S rRNA/L5/L18/L25 subcomplex. Contacts the 5S rRNA and the P site tRNA. Forms a bridge to the 30S subunit in the 70S ribosome.

Functionally, this is one of the proteins that bind and probably mediate the attachment of the 5S RNA into the large ribosomal subunit, where it forms part of the central protuberance. In the 70S ribosome it contacts protein S13 of the 30S subunit (bridge B1b), connecting the 2 subunits; this bridge is implicated in subunit movement. Contacts the P site tRNA; the 5S rRNA and some of its associated proteins might help stabilize positioning of ribosome-bound tRNAs. The protein is Large ribosomal subunit protein uL5 of Legionella pneumophila subsp. pneumophila (strain Philadelphia 1 / ATCC 33152 / DSM 7513).